Here is a 646-residue protein sequence, read N- to C-terminus: Threonine--tRNA ligase (646 aa).

Residues 1 to 63 (MADLSIIFPD…SSGGSIEIIT (63 aa)) form the TGS domain. The tract at residues 244-541 (DHRKLGKELG…LIEEYKGAFP (298 aa)) is catalytic. Positions 337, 388, and 518 each coordinate Zn(2+).

This sequence belongs to the class-II aminoacyl-tRNA synthetase family. Homodimer. Requires Zn(2+) as cofactor.

It is found in the cytoplasm. It carries out the reaction tRNA(Thr) + L-threonine + ATP = L-threonyl-tRNA(Thr) + AMP + diphosphate + H(+). In terms of biological role, catalyzes the attachment of threonine to tRNA(Thr) in a two-step reaction: L-threonine is first activated by ATP to form Thr-AMP and then transferred to the acceptor end of tRNA(Thr). Also edits incorrectly charged L-seryl-tRNA(Thr). This chain is Threonine--tRNA ligase, found in Oceanobacillus iheyensis (strain DSM 14371 / CIP 107618 / JCM 11309 / KCTC 3954 / HTE831).